The sequence spans 231 residues: Isoprenyl transferase (231 aa).

D14 is an active-site residue. Residue D14 participates in Mg(2+) binding. Substrate contacts are provided by residues G15–R18, W19, R27, H31, and S59–E61. The active-site Proton acceptor is the N62. Substrate contacts are provided by residues W63, R65, R176, and R182–S184. E195 is a Mg(2+) binding site.

The protein belongs to the UPP synthase family. In terms of assembly, homodimer. It depends on Mg(2+) as a cofactor.

Catalyzes the condensation of isopentenyl diphosphate (IPP) with allylic pyrophosphates generating different type of terpenoids. This Aquifex pyrophilus protein is Isoprenyl transferase.